We begin with the raw amino-acid sequence, 901 residues long: HTH-type transcriptional regulator MalT (901 aa).

Position 39-46 (39-46 (SPAGYGKT)) interacts with ATP. In terms of domain architecture, HTH luxR-type spans 829–894 (ELIRTSPLTQ…DAVQHAQQLL (66 aa)). Residues 853-872 (NEQIAGELEVAATTIKTHIR) constitute a DNA-binding region (H-T-H motif).

Belongs to the MalT family. As to quaternary structure, monomer in solution. Oligomerizes to an active state in the presence of the positive effectors ATP and maltotriose.

Its activity is regulated as follows. Activated by ATP and maltotriose, which are both required for DNA binding. Functionally, positively regulates the transcription of the maltose regulon whose gene products are responsible for uptake and catabolism of malto-oligosaccharides. Specifically binds to the promoter region of its target genes, recognizing a short DNA motif called the MalT box. The protein is HTH-type transcriptional regulator MalT of Escherichia coli (strain K12 / MC4100 / BW2952).